A 184-amino-acid chain; its full sequence is Translation initiation factor IF-3 (184 aa).

The protein belongs to the IF-3 family. In terms of assembly, monomer.

It localises to the cytoplasm. Functionally, IF-3 binds to the 30S ribosomal subunit and shifts the equilibrium between 70S ribosomes and their 50S and 30S subunits in favor of the free subunits, thus enhancing the availability of 30S subunits on which protein synthesis initiation begins. The protein is Translation initiation factor IF-3 of Mycoplasma genitalium (strain ATCC 33530 / DSM 19775 / NCTC 10195 / G37) (Mycoplasmoides genitalium).